The following is a 340-amino-acid chain: MLDIDKSTVDFLVTENMVQEVEKVLSHDVPLVHAIVEEMVKRDIDRIYFVACGSPLNAAQTAKHLADRFSDLQVYAISGWEFCDNTPYRLDDRCAVIGVSDYGKTEEVIKALELGRACGALTAAFTKRADSPITSAAEFSIDYQADCIWEIHLLLCYSVVLEMITRLAPNAEIGKIKNDLKQLPNALGHLVRTWEEKGRQLGELASQWPMIYTVAAGPLRPLGYKEGIVTLMEFTWTHGCVIESGEFRHGPLEIVEPGVPFLFLLGNDESRHTTERAINFVKQRTDNVIVIDYAEISQGLHPWLAPFLMFVPMEWLCYYLSIYKDHNPDERRYYGGLVEY.

SIS domains lie at 35-169 (IVEE…RLAP) and 201-331 (LGEL…PDER).

In terms of assembly, homododecamer.

The catalysed reaction is N(6)-(6-phospho-D-fructosyl)-L-lysine + H2O = D-glucose 6-phosphate + L-lysine. The protein operates within carbohydrate metabolism; fructoselysine degradation; D-glucose 6-phosphate and lysine from fructoselysine: step 2/2. Strongly inhibited by ZnCl(2). In terms of biological role, catalyzes the reversible conversion of fructoselysine 6-phosphate to glucose 6-phosphate and lysine. Functions in a fructoselysine degradation pathway that allows E.coli to grow on fructoselysine or psicoselysine. In Escherichia coli (strain K12), this protein is Fructoselysine 6-phosphate deglycase.